The chain runs to 152 residues: Nucleoside diphosphate kinase A 2 (152 aa).

Residues lysine 12, phenylalanine 60, arginine 88, threonine 94, arginine 105, and asparagine 115 each coordinate ATP. Residue histidine 118 is the Pros-phosphohistidine intermediate of the active site.

Belongs to the NDK family. Homohexamer. Mg(2+) is required as a cofactor. In terms of processing, the N-terminus is blocked.

It is found in the cytoplasm. Its subcellular location is the cell membrane. The protein resides in the nucleus. The enzyme catalyses a 2'-deoxyribonucleoside 5'-diphosphate + ATP = a 2'-deoxyribonucleoside 5'-triphosphate + ADP. The catalysed reaction is a ribonucleoside 5'-diphosphate + ATP = a ribonucleoside 5'-triphosphate + ADP. Autophosphorylation at His-118 increases serine/threonine protein kinase activity of the enzyme. Interaction with the SET complex inhibits exonuclease activity. Functionally, major role in the synthesis of nucleoside triphosphates other than ATP. Possesses nucleoside-diphosphate kinase, serine/threonine-specific protein kinase, geranyl and farnesyl pyrophosphate kinase, histidine protein kinase and 3'-5' exonuclease activities. Involved in cell proliferation, differentiation and development, signal transduction, G protein-coupled receptor endocytosis, and gene expression. Required for neural development including neural patterning and cell fate determination. This is Nucleoside diphosphate kinase A 2 (NME1-2) from Bos taurus (Bovine).